Here is a 632-residue protein sequence, read N- to C-terminus: Probable potassium transport system protein Kup 1 (632 aa).

Transmembrane regions (helical) follow at residues 17–37 (LFYL…TSPL), 60–80 (LISL…VLFL), 106–126 (TAIL…DAMI), 146–166 (LADY…VVQS), 175–195 (FFGP…ISHI), 210–230 (AVAF…AVFL), 254–274 (WFLL…ALVL), 292–312 (ALLP…QAVI), 344–364 (IFVP…VLGF), 370–390 (LATA…IMAF), 401–421 (LPVA…FLGA), and 426–446 (IHDG…VMWT).

The protein belongs to the HAK/KUP transporter (TC 2.A.72) family.

It localises to the cell inner membrane. It catalyses the reaction K(+)(in) + H(+)(in) = K(+)(out) + H(+)(out). Transport of potassium into the cell. Likely operates as a K(+):H(+) symporter. The sequence is that of Probable potassium transport system protein Kup 1 from Rhizobium johnstonii (strain DSM 114642 / LMG 32736 / 3841) (Rhizobium leguminosarum bv. viciae).